Here is a 784-residue protein sequence, read N- to C-terminus: Cyclin-dependent kinase 11B (784 aa).

Residues 18–60 show a composition bias toward basic and acidic residues; sequence QEKKRRKEQEEKAEIKRLKNSDDRDSKRDSLEEGELRDHRMEI. The disordered stretch occupies residues 18-401; that stretch reads QEKKRRKEQE…EGDYVPDSPA (384 aa). Residues Ser-47 and Ser-72 each carry the phosphoserine modification. Residues 95 to 113 show a composition bias toward basic residues; sequence EKAHHRKDEKRKEKRRHRS. Basic and acidic residues-rich tracts occupy residues 114–131, 138–227, and 238–263; these read HSAE…EREH, REEQ…DKGK, and PPRE…RDLL. Phosphoserine is present on Ser-115. The residue at position 270 (Ser-270) is a Phosphoserine. The span at 278-289 shows a compositional bias: low complexity; the sequence is SAESSSAESGSG. 2 stretches are compositionally biased toward acidic residues: residues 290 to 353 and 372 to 381; these read SEEE…EDRE and DSEEGEEEVG. One can recognise a Protein kinase domain in the interval 427–712; sequence FQCLNRIEEG…AEDGLKHEYF (286 aa). ATP contacts are provided by residues 433–441 and Lys-456; that span reads IEEGTYGVV. A Phosphoserine; by CDK7 modification is found at Ser-471. Thr-477 carries the post-translational modification Phosphothreonine; by CDK7. The active-site Proton acceptor is Asp-551. At Ser-578 the chain carries Phosphoserine. The residue at position 583 (Tyr-583) is a Phosphotyrosine. A Phosphothreonine modification is found at Thr-584. A Glycyl lysine isopeptide (Lys-Gly) (interchain with G-Cter in SUMO2) cross-link involves residue Lys-630. Residues 722-784 form a disordered region; sequence SMFPTWPAKS…AAGPGFSLKF (63 aa). The residue at position 740 (Thr-740) is a Phosphothreonine. A Phosphoserine modification is found at Ser-741.

Belongs to the protein kinase superfamily. CMGC Ser/Thr protein kinase family. CDC2/CDKX subfamily. May interact PAK1 and RANBP9. p110C interacts with RNPS1. Interacts with CCND3. Interacts with CCNL1 and CCNL2. Forms complexes with pre-mRNA-splicing factors, including at least SRSF1, SRSF2 AND SRSF7/SLU7. It depends on Mg(2+) as a cofactor. Phosphorylation at Ser-115 creates a binding site for 14-3-3 proteins.

It catalyses the reaction L-seryl-[protein] + ATP = O-phospho-L-seryl-[protein] + ADP + H(+). The catalysed reaction is L-threonyl-[protein] + ATP = O-phospho-L-threonyl-[protein] + ADP + H(+). With respect to regulation, phosphorylation at Thr-437 or Tyr-438 inactivates the enzyme, while phosphorylation at Thr-584 activates it. Plays multiple roles in cell cycle progression, cytokinesis and apoptosis. Involved in pre-mRNA splicing in a kinase activity-dependent manner. May act as a negative regulator of normal cell cycle progression. This is Cyclin-dependent kinase 11B (Cdk11b) from Mus musculus (Mouse).